The sequence spans 208 residues: Small ribosomal subunit protein uS4 (208 aa).

Positions 98-158 (RRLDNVVYRL…EKSRKIACIN (61 aa)) constitute an S4 RNA-binding domain.

This sequence belongs to the universal ribosomal protein uS4 family. In terms of assembly, part of the 30S ribosomal subunit. Contacts protein S5. The interaction surface between S4 and S5 is involved in control of translational fidelity.

One of the primary rRNA binding proteins, it binds directly to 16S rRNA where it nucleates assembly of the body of the 30S subunit. Functionally, with S5 and S12 plays an important role in translational accuracy. The protein is Small ribosomal subunit protein uS4 of Geobacter metallireducens (strain ATCC 53774 / DSM 7210 / GS-15).